A 130-amino-acid polypeptide reads, in one-letter code: Small ribosomal subunit protein uS9 (130 aa).

This sequence belongs to the universal ribosomal protein uS9 family.

The protein is Small ribosomal subunit protein uS9 of Magnetococcus marinus (strain ATCC BAA-1437 / JCM 17883 / MC-1).